Consider the following 769-residue polypeptide: Cap-specific mRNA (nucleoside-2'-O-)-methyltransferase 2 (769 aa).

The region spanning 109–322 is the Adrift-type SAM-dependent 2'-O-MTase domain; the sequence is ELCTQAWCKF…VYVVCLYYKG (214 aa). K117 is a catalytic residue. S-adenosyl-L-methionine-binding residues include G148, W167, and D235. D235 is an active-site residue. Catalysis depends on K275, which acts as the Proton acceptor.

The protein resides in the nucleus. It is found in the cytoplasm. The enzyme catalyses a 5'-end (N(7)-methyl 5'-triphosphoguanosine)-(2'-O-methyl-ribonucleoside)-(ribonucleotide) in mRNA + S-adenosyl-L-methionine = a 5'-end (N(7)-methyl 5'-triphosphoguanosine)-(2'-O-methyl-ribonucleoside)-(2'-O-methyl-ribonucleotide) in mRNA + S-adenosyl-L-homocysteine + H(+). In terms of biological role, S-adenosyl-L-methionine-dependent methyltransferase that mediates mRNA cap2 2'-O-ribose methylation to the 5'-cap structure of mRNAs. Methylates the ribose of the second nucleotide of a m(7)GpppG-capped mRNA and small nuclear RNA (snRNA) (cap0) to produce m(7)GpppRmpNm (cap2). Recognizes a guanosine cap on RNA independently of its N(7) methylation status. Display cap2 methylation on both cap0 and cap1. Displays a preference for cap1 RNAs. The sequence is that of Cap-specific mRNA (nucleoside-2'-O-)-methyltransferase 2 (CMTR2) from Pongo abelii (Sumatran orangutan).